Reading from the N-terminus, the 892-residue chain is MTDPFCVGGRRLPGSSKSGPGKDGSRKEVRLPMLHDPPKMGMPVVRGGQTVPGQAPLCFDPGSPASDKTEGKKKGRPKAENQALRDIPLSLMNDWKDEFKAHSRVKCPNSGCWLEFPSIYGLKYHYQRCQGGAISDRLAFPCPFCEAAFTSKTQLEKHRIWNHMDRPLPASKPGPISRPVTISRPVGVSKPIGVSKPVTIGKPVGVSKPIGISKPVSVGRPMPVTKAIPVTRPVPVTKPVTVSRPMPVTKAMPVTKPITVTKSVPVTKPVPVTKPITVTKLVTVTKPVPVTKPVTVSRPIVVSKPVTVSRPIAISRHTPPCKMVLLTRSENKAPRATGRNSGKKRAADSLDTCPIPPKQARPENGEYGPSSMGQSSAFQLSADTSSGSLSPGSRPSGGMEALKAAGPASPPEEDPERTKHRRKQKTPKKFTGEQPSISGTFGLKGLVKAEDKARVHRSKKQEGPGPEDARKKVPAAPITVSKEAPAPVAHPAPGGPEEQWQRAIHERGEAVCPTCNVVTRKTLVGLKKHMEVCQKLQDALKCQHCRKQFKSKAGLNYHTMAEHSAKPSDAEASEGGEQEERERLRKVLKQMGRLRCPQEGCGAAFSSLMGYQYHQRRCGKPPCEVDSPSFPCTHCGKTYRSKAGHDYHVRSEHTAPPPEEPTDKSPEAEDPLGVERTPSGRVRRTSAQVAVFHLQEIAEDELARDWTKRRMKDDLVPETARLNYTRPGLPTLNPQLLEAWKNEVKEKGHVNCPNDCCEAIYSSVSGLKAHLASCSKGAHLAGKYRCLLCPKEFSSESGVKYHILKTHAENWFRTSADPPPKHRSQDSLVPKKEKKKNLAGGKKRGRKPKERTPEEPVAKLPPRRDDWPPGCRDKGARGSTGRKVGVSKAPEK.

The disordered stretch occupies residues 1–82; it reads MTDPFCVGGR…KKGRPKAENQ (82 aa). The segment covering 8–19 has biased composition (low complexity); that stretch reads GGRRLPGSSKSG. The C2H2-type 1; atypical zinc-finger motif lies at 105 to 129; sequence VKCPNSGCWLEFPSIYGLKYHYQRC. Residues 140–163 form a C2H2-type 2 zinc finger; sequence FPCPFCEAAFTSKTQLEKHRIWNH. 2 disordered regions span residues 323–473 and 562–582; these read MVLL…RKKV and EHSAKPSDAEASEGGEQEERE. Positions 371–384 are enriched in polar residues; it reads SMGQSSAFQLSADT. Residues 385-398 show a composition bias toward low complexity; the sequence is SSGSLSPGSRPSGG. Residue serine 409 is modified to Phosphoserine. Residues 418–428 are compositionally biased toward basic residues; that stretch reads TKHRRKQKTPK. The NuRD interaction motif signature appears at 421 to 427; that stretch reads RRKQKTP. The C2H2-type 3 zinc finger occupies 540–563; the sequence is LKCQHCRKQFKSKAGLNYHTMAEH. The C2H2-type 4; atypical zinc-finger motif lies at 594 to 618; sequence LRCPQEGCGAAFSSLMGYQYHQRRC. The C2H2-type 5 zinc-finger motif lies at 630-653; sequence FPCTHCGKTYRSKAGHDYHVRSEH. Residues 649 to 682 are disordered; that stretch reads VRSEHTAPPPEEPTDKSPEAEDPLGVERTPSGRV. Serine 686 is subject to Phosphoserine. The C2H2-type 6; atypical zinc-finger motif lies at 750–774; the sequence is VNCPNDCCEAIYSSVSGLKAHLASC. Residues 784–807 form a C2H2-type 7 zinc finger; the sequence is YRCLLCPKEFSSESGVKYHILKTH. The interval 812 to 892 is disordered; it reads FRTSADPPPK…KVGVSKAPEK (81 aa). Over residues 819–831 the composition is skewed to basic and acidic residues; it reads PPKHRSQDSLVPK. The span at 832-849 shows a compositional bias: basic residues; it reads KEKKKNLAGGKKRGRKPK. Residues 850 to 876 show a composition bias toward basic and acidic residues; it reads ERTPEEPVAKLPPRRDDWPPGCRDKGA.

It belongs to the krueppel C2H2-type zinc-finger protein family. As to quaternary structure, interacts (via its NuRD interaction motif) with RBBP4 of the nucleosome remodeling and deacetylase (NuRD) complex; the interaction is direct and may play a role in repressing gene expression.

The protein resides in the nucleus. Involved in transcriptional regulation by repressing gene expression. Associates with the nucleosome remodeling and histone deacetylase (NuRD) complex, which promotes transcriptional repression by histone deacetylation and nucleosome remodeling. This Homo sapiens (Human) protein is Zinc finger protein 512B (ZNF512B).